A 566-amino-acid polypeptide reads, in one-letter code: Probable cytochrome P450 519D1 (566 aa).

Residues 1–21 (MNVFVLTFFICIIYLLFDLIK) form a helical membrane-spanning segment. The disordered stretch occupies residues 471–491 (FNNNNNNNNNNNNNNSNNKHK). The span at 472–487 (NNNNNNNNNNNNNNSN) shows a compositional bias: low complexity. C510 is a binding site for heme.

This sequence belongs to the cytochrome P450 family. Heme serves as cofactor.

Its subcellular location is the membrane. This is Probable cytochrome P450 519D1 (cyp519D1) from Dictyostelium discoideum (Social amoeba).